The following is a 791-amino-acid chain: Cullin-2 (791 aa).

Residues 722 to 784 enclose the Cullin neddylation domain; sequence DRKYYMECAI…KMYIQRTDQN (63 aa). K736 participates in a covalent cross-link: Glycyl lysine isopeptide (Lys-Gly) (interchain with G-Cter in NEDD8).

The protein belongs to the cullin family. As to quaternary structure, component of multiple CBC (Cul2-ElonginB-ElonginC) E3 ubiquitin-protein ligase complexes formed of cul-2, elb-1, elc-1, rbx-1 and a variable substrate recognition component. Component of the CBC(fem-1) E3 ubiquitin-protein ligase complex with fem-1, fem-2 and fem-3. The CBC(fem-1) complex interacts with tra-1 and promotes tra-1 degradation. Probable component of the CBC(lrr-1) E3 ubiquitin-protein ligase complex incuding cul-2, elb-1, elc-1, rbx-1 and lrr-1. The CBC(lrr-1) complex interacts with the DNA replisome complex at the end of S phase; the interaction promotes the release of components of the CMG helicase complex (a component of the replisome) from chromatin. Probable component of an CBC(zif-1) E3 ubiquitin-protein ligase including cul-2, elc-1, rbx-1 and zif-1. Part of an E3 ubiquitin-protein ligase complex including cul-2, elc-1 and zyg-11. Interacts with Skp1-related protein skr-10. Post-translationally, neddylated; which enhances the ubiquitination activity of CBC (Cul2-ElonginB-ElonginC) E3 ubiquitin-protein ligase complexes. In terms of tissue distribution, in adults, highly expressed in meiotic cells and oocytes. In larvae, expressed in many proliferating cell types: P cells during the L1 stage; seam cells when they divide at every molt; vulval and somatic gonad cells in late L3 and L4 stages; and intestinal cells throughout larval development.

The protein resides in the cytoplasm. It is found in the nucleus. It participates in protein modification; protein ubiquitination. Functionally, core component of multiple cullin-RING-based CBC (Cul2-ElonginB-ElonginC) E3 ubiquitin-protein ligase complexes which mediate the ubiquitination and subsequent proteasomal degradation of target proteins. As a scaffold protein may contribute to catalysis through positioning of the substrate and the ubiquitin-conjugating enzyme. The functional specificity of the CBC complex depends on the variable substrate recognition component. May function in ubiquitin-mediated degradation of CKIs to target cki-1 for degradation. CBC(zif-1) may ensure germline precursor cell asymmetry by targeting germline proteins for destruction if expressed in non-germline cells. As part of the CBC(fem-1) complex directs ubiquitination of tra-1. As part of the CBC(lrr-1) complex, required for the ubiquitination and dissasembly of the CMG helicase complex from chromatin at the end of DNA replication. Positive cell-cycle regulator that is required at two distinct points in the cell cycle; the G1-to-S-phase transition and mitosis. Also required for proper cytoskeletal movement and mitotic chromosome condensation. The polypeptide is Cullin-2 (Caenorhabditis elegans).